A 469-amino-acid polypeptide reads, in one-letter code: Protein C-ets-2 (469 aa).

The PNT domain maps to 85–170; it reads ATFSGFKKEQ…EHLEQMIKEN (86 aa). Residues Ser-220 and Ser-225 each carry the phosphoserine modification. The segment at 264–289 is disordered; the sequence is NLLTNNSGTPKDHDSPENGADSFESS. Residues Ser-295, Ser-298, and Ser-301 each carry the phosphoserine modification. The segment at residues 363–443 is a DNA-binding region (ETS); that stretch reads IQLWQFLLEL…SGKRYVYRFV (81 aa).

Belongs to the ETS family. In terms of processing, phosphorylation by CDK10 at Ser-220 and Ser-225 creates a phosphodegron that targets ETS2 for proteasomal degradation.

Its subcellular location is the nucleus. Functionally, transcription factor activating transcription. Binds specifically the DNA GGAA/T core motif (Ets-binding site or EBS) in gene promoters and stimulates transcription. The sequence is that of Protein C-ets-2 (ETS2) from Homo sapiens (Human).